We begin with the raw amino-acid sequence, 361 residues long: Histidinol-phosphate aminotransferase (361 aa).

Position 219 is an N6-(pyridoxal phosphate)lysine (lysine 219).

This sequence belongs to the class-II pyridoxal-phosphate-dependent aminotransferase family. Histidinol-phosphate aminotransferase subfamily. In terms of assembly, homodimer. It depends on pyridoxal 5'-phosphate as a cofactor.

It carries out the reaction L-histidinol phosphate + 2-oxoglutarate = 3-(imidazol-4-yl)-2-oxopropyl phosphate + L-glutamate. Its pathway is amino-acid biosynthesis; L-histidine biosynthesis; L-histidine from 5-phospho-alpha-D-ribose 1-diphosphate: step 7/9. In Acinetobacter baumannii (strain ACICU), this protein is Histidinol-phosphate aminotransferase.